Consider the following 134-residue polypeptide: Ribonuclease VapC1 (134 aa).

Positions 4-123 (IIDTSIIIAL…LNVKDFKRIQ (120 aa)) constitute a PINc domain. Mg(2+) contacts are provided by aspartate 6 and aspartate 97.

This sequence belongs to the PINc/VapC protein family. Mg(2+) serves as cofactor.

Toxic component of a type II toxin-antitoxin (TA) system. Has ssRNase activity. Upon expression in E.coli inhibits growth in liquid culture; this toxic effect is neutralized by coexpression with cognate antitoxin VapB1. Its RNase activity is partially inhibited in vitro by VapB1. In Rickettsia felis (strain ATCC VR-1525 / URRWXCal2) (Rickettsia azadi), this protein is Ribonuclease VapC1.